The sequence spans 317 residues: L-lactate dehydrogenase (317 aa).

Residues V17, D38, K43, Y69, and 83–84 each bind NAD(+); that span reads GA. 2 residues coordinate substrate: Q86 and R92. NAD(+) contacts are provided by residues S105, 122–124, and S147; that span reads ATN. 124–127 is a substrate binding site; that stretch reads NPVD. A substrate-binding site is contributed by 152-155; the sequence is DSAR. Residues R157 and H172 each coordinate beta-D-fructose 1,6-bisphosphate. H179 serves as the catalytic Proton acceptor. At Y224 the chain carries Phosphotyrosine. T233 is a substrate binding site.

The protein belongs to the LDH/MDH superfamily. LDH family. As to quaternary structure, homotetramer.

It is found in the cytoplasm. It carries out the reaction (S)-lactate + NAD(+) = pyruvate + NADH + H(+). It participates in fermentation; pyruvate fermentation to lactate; (S)-lactate from pyruvate: step 1/1. Allosterically activated by fructose 1,6-bisphosphate (FBP). In terms of biological role, catalyzes the conversion of lactate to pyruvate. This chain is L-lactate dehydrogenase, found in Bacillus velezensis (strain DSM 23117 / BGSC 10A6 / LMG 26770 / FZB42) (Bacillus amyloliquefaciens subsp. plantarum).